Here is a 199-residue protein sequence, read N- to C-terminus: dITP/XTP pyrophosphatase (199 aa).

8–13 (TSNINK) serves as a coordination point for substrate. Asp68 (proton acceptor) is an active-site residue. Asp68 is a Mg(2+) binding site. Substrate contacts are provided by residues Ser69, 155–158 (FGYD), Lys177, and 182–183 (HR).

Belongs to the HAM1 NTPase family. Homodimer. Requires Mg(2+) as cofactor.

It catalyses the reaction XTP + H2O = XMP + diphosphate + H(+). It carries out the reaction dITP + H2O = dIMP + diphosphate + H(+). The catalysed reaction is ITP + H2O = IMP + diphosphate + H(+). Functionally, pyrophosphatase that catalyzes the hydrolysis of nucleoside triphosphates to their monophosphate derivatives, with a high preference for the non-canonical purine nucleotides XTP (xanthosine triphosphate), dITP (deoxyinosine triphosphate) and ITP. Seems to function as a house-cleaning enzyme that removes non-canonical purine nucleotides from the nucleotide pool, thus preventing their incorporation into DNA/RNA and avoiding chromosomal lesions. This is dITP/XTP pyrophosphatase from Borrelia duttonii (strain Ly).